Consider the following 391-residue polypeptide: Elongation factor Tu (391 aa).

Residues 10-201 (KPHVNIGTIG…EVDNYIPTPE (192 aa)) enclose the tr-type G domain. A G1 region spans residues 19 to 26 (GHVDHGKT). 19–26 (GHVDHGKT) provides a ligand contact to GTP. Thr-26 contributes to the Mg(2+) binding site. The segment at 55–59 (GITIS) is G2. The interval 76–79 (DCPG) is G3. GTP contacts are provided by residues 76 to 80 (DCPGH) and 131 to 134 (NKVD). The tract at residues 131–134 (NKVD) is G4. The tract at residues 169–171 (SAL) is G5.

Belongs to the TRAFAC class translation factor GTPase superfamily. Classic translation factor GTPase family. EF-Tu/EF-1A subfamily. Monomer.

It is found in the cytoplasm. It catalyses the reaction GTP + H2O = GDP + phosphate + H(+). GTP hydrolase that promotes the GTP-dependent binding of aminoacyl-tRNA to the A-site of ribosomes during protein biosynthesis. The chain is Elongation factor Tu from Bartonella henselae (strain ATCC 49882 / DSM 28221 / CCUG 30454 / Houston 1) (Rochalimaea henselae).